The chain runs to 705 residues: Elongation factor G (705 aa).

One can recognise a tr-type G domain in the interval 8 to 294; the sequence is DRYRNFGIMA…AVIDYLPSPL (287 aa). GTP is bound by residues 17-24, 92-96, and 146-149; these read AHIDAGKT, DTPGH, and NKMD.

The protein belongs to the TRAFAC class translation factor GTPase superfamily. Classic translation factor GTPase family. EF-G/EF-2 subfamily.

The protein localises to the cytoplasm. In terms of biological role, catalyzes the GTP-dependent ribosomal translocation step during translation elongation. During this step, the ribosome changes from the pre-translocational (PRE) to the post-translocational (POST) state as the newly formed A-site-bound peptidyl-tRNA and P-site-bound deacylated tRNA move to the P and E sites, respectively. Catalyzes the coordinated movement of the two tRNA molecules, the mRNA and conformational changes in the ribosome. In Dinoroseobacter shibae (strain DSM 16493 / NCIMB 14021 / DFL 12), this protein is Elongation factor G.